Reading from the N-terminus, the 180-residue chain is Large ribosomal subunit protein uL10 (180 aa).

The interval 161–180 (SKAEGSEETESNETTETVEE) is disordered. Over residues 166 to 180 (SEETESNETTETVEE) the composition is skewed to acidic residues.

This sequence belongs to the universal ribosomal protein uL10 family. As to quaternary structure, part of the ribosomal stalk of the 50S ribosomal subunit. The N-terminus interacts with L11 and the large rRNA to form the base of the stalk. The C-terminus forms an elongated spine to which L12 dimers bind in a sequential fashion forming a multimeric L10(L12)X complex.

Forms part of the ribosomal stalk, playing a central role in the interaction of the ribosome with GTP-bound translation factors. The chain is Large ribosomal subunit protein uL10 from Finegoldia magna (strain ATCC 29328 / DSM 20472 / WAL 2508) (Peptostreptococcus magnus).